A 309-amino-acid polypeptide reads, in one-letter code: MRPKISIIGAGFVGSTAAHWIASKELGDVVLVDIIDGVPQGKGLDLLQAGPIEGFDVKITGTNDYAATANSDIIIVTSGAPRKPGMSREDLIRVNADITRDCISKAAPLSPDAVIIMVNNPLDTMTYLAKQVSGFPKNRVVGQAGVLDTARYRTFIAMEAGVSVEDIQAMLMGGHGDEMVPLPRFTTISGIPVTEFISKERLDAIIERTRKGGGEIVNLLKTGSAYYAPSAATVQMVEAILRDKKRVLPCACYLEGEYGLNDIYFGVPCVLGAGGVERVLELPLNDEEMALVRKSAEAVSSSIATLKQM.

NAD(+) is bound by residues 9–14 (GAGFVG) and Asp-33. Residues Arg-82 and Arg-88 each contribute to the substrate site. NAD(+)-binding positions include Asn-95 and 118–120 (VNN). Residues Asn-120 and Arg-151 each coordinate substrate. The Proton acceptor role is filled by His-175.

This sequence belongs to the LDH/MDH superfamily. MDH type 3 family.

It carries out the reaction (S)-malate + NAD(+) = oxaloacetate + NADH + H(+). Its function is as follows. Catalyzes the reversible oxidation of malate to oxaloacetate. The protein is Malate dehydrogenase of Roseiflexus castenholzii (strain DSM 13941 / HLO8).